The primary structure comprises 563 residues: Germacrene-A synthase (563 aa).

Residues aspartate 316, aspartate 320, aspartate 460, threonine 464, and glutamate 468 each coordinate Mg(2+). Residues 316–320 carry the DDXXD motif motif; the sequence is DDTYD.

The protein belongs to the terpene synthase family. Tpsa subfamily. Requires Mg(2+) as cofactor. Mn(2+) is required as a cofactor. High expression in disk florets, moderate expression in ray florets and detected in leaves and stems, but not in roots.

It catalyses the reaction (2E,6E)-farnesyl diphosphate = (+)-(R)-germacrene A + diphosphate. It participates in secondary metabolite biosynthesis; terpenoid biosynthesis. Its function is as follows. Sesquiterpene synthase involved in germacrene A biosynthesis. May be involved in the biosynthesis of the sesquiterpene lactone matricine, one of the major active compounds of chamomile flowers. This is Germacrene-A synthase from Matricaria chamomilla var. recutita (German chamomile).